A 180-amino-acid polypeptide reads, in one-letter code: ADP-ribosylation factor 5 (180 aa).

Gly2 carries N-myristoyl glycine lipidation. GTP is bound by residues 24–31 (GLDAAGKT), 67–71 (DVGGQ), and 126–129 (NKQD).

The protein belongs to the small GTPase superfamily. Arf family.

The protein resides in the golgi apparatus. GTP-binding protein involved in protein trafficking; may modulate vesicle budding and uncoating within the Golgi apparatus. In Gallus gallus (Chicken), this protein is ADP-ribosylation factor 5 (ARF5).